The sequence spans 458 residues: D-inositol 3-phosphate glycosyltransferase (458 aa).

A 1D-myo-inositol 3-phosphate-binding site is contributed by His-16. Residues 22–23 (QP) and Gly-30 each bind UDP-N-acetyl-alpha-D-glucosamine. 1D-myo-inositol 3-phosphate-binding positions include 27-32 (DAGGMN), Lys-85, Tyr-118, Thr-142, and Arg-162. Arg-236, Lys-241, and Gln-302 together coordinate UDP-N-acetyl-alpha-D-glucosamine. Tyr-311, Arg-312, and Ser-314 together coordinate Mg(2+). Positions 324 and 332 each coordinate UDP-N-acetyl-alpha-D-glucosamine. Thr-338 lines the Mg(2+) pocket. The segment at 428-458 (VAAQNVTGSSSRTRRPWRRRRSTLLPMTGRS) is disordered. Residues 439 to 449 (RTRRPWRRRRS) show a composition bias toward basic residues.

It belongs to the glycosyltransferase group 1 family. MshA subfamily. In terms of assembly, homodimer.

It carries out the reaction 1D-myo-inositol 3-phosphate + UDP-N-acetyl-alpha-D-glucosamine = 1D-myo-inositol 2-acetamido-2-deoxy-alpha-D-glucopyranoside 3-phosphate + UDP + H(+). Its function is as follows. Catalyzes the transfer of a N-acetyl-glucosamine moiety to 1D-myo-inositol 3-phosphate to produce 1D-myo-inositol 2-acetamido-2-deoxy-glucopyranoside 3-phosphate in the mycothiol biosynthesis pathway. In Gordonia bronchialis (strain ATCC 25592 / DSM 43247 / BCRC 13721 / JCM 3198 / KCTC 3076 / NBRC 16047 / NCTC 10667) (Rhodococcus bronchialis), this protein is D-inositol 3-phosphate glycosyltransferase.